The chain runs to 335 residues: Polyprenol dehydrogenase (335 aa).

4 residues coordinate NAD(+): I55, Y208, K212, and T245. Y208 functions as the Proton acceptor in the catalytic mechanism.

The protein belongs to the short-chain dehydrogenases/reductases (SDR) family.

The protein resides in the lipid droplet. It is found in the secreted. It catalyses the reaction a di-trans,poly-cis-polyprenol + NAD(+) = a di-trans,poly-cis-polyprenal + NADH + H(+). It carries out the reaction a di-trans,poly-cis-polyprenol + NADP(+) = a di-trans,poly-cis-polyprenal + NADPH + H(+). The catalysed reaction is a di-trans,poly-cis-dolichol + NADP(+) = a di-trans,poly-cis-dolichal + NADPH + H(+). The enzyme catalyses a di-trans,poly-cis-dolichol + NAD(+) = a di-trans,poly-cis-dolichal + NADH + H(+). The protein operates within protein modification; protein glycosylation. In terms of biological role, oxidoreductase that plays a key role in early steps of protein N-linked glycosylation by mediating two non-consecutive steps in dolichol biosynthesis. Acts both as a NAD(+)-dependent dehydrogenase and as a NADPH-dependent reductase during the conversion of polyprenol into dolichol. First catalyzes the NAD(+)-dependent dehydrogenation of polyprenol into polyprenal; polyprenal is then reduced into dolichal by SRD5A3. It then catalyzes the NADPH-dependent reduction of dolichal into dolichol. May also acts as a positive regulator of starvation-induced autophagy. The protein is Polyprenol dehydrogenase (Dhrsx) of Mus musculus (Mouse).